A 427-amino-acid chain; its full sequence is Dihydroorotase (427 aa).

Positions 60 and 62 each coordinate Zn(2+). Substrate-binding positions include 62 to 64 (HLR) and asparagine 94. Zn(2+) is bound by residues aspartate 152, histidine 179, and histidine 232. Asparagine 278 is a binding site for substrate. Residue aspartate 305 participates in Zn(2+) binding. Aspartate 305 is a catalytic residue. Substrate is bound by residues histidine 309 and 323 to 324 (FG).

The protein belongs to the metallo-dependent hydrolases superfamily. DHOase family. Class I DHOase subfamily. Requires Zn(2+) as cofactor.

The catalysed reaction is (S)-dihydroorotate + H2O = N-carbamoyl-L-aspartate + H(+). It functions in the pathway pyrimidine metabolism; UMP biosynthesis via de novo pathway; (S)-dihydroorotate from bicarbonate: step 3/3. Catalyzes the reversible cyclization of carbamoyl aspartate to dihydroorotate. This is Dihydroorotase from Geobacillus sp. (strain WCH70).